Here is a 100-residue protein sequence, read N- to C-terminus: Small ribosomal subunit protein bS20 (100 aa).

The span at 1-20 (MASGKPKKKNPRLASGRKRV) shows a compositional bias: basic residues. Positions 1 to 21 (MASGKPKKKNPRLASGRKRVR) are disordered.

It belongs to the bacterial ribosomal protein bS20 family.

Functionally, binds directly to 16S ribosomal RNA. This chain is Small ribosomal subunit protein bS20, found in Albidiferax ferrireducens (strain ATCC BAA-621 / DSM 15236 / T118) (Rhodoferax ferrireducens).